A 247-amino-acid chain; its full sequence is 4-hydroxy-tetrahydrodipicolinate reductase (247 aa).

NAD(+)-binding positions include Gly9–Met14, Gly76–Thr78, and Ala103–Phe106. The active-site Proton donor/acceptor is His133. His134 is a binding site for (S)-2,3,4,5-tetrahydrodipicolinate. The Proton donor role is filled by Lys137. Residue Gly143–Thr144 coordinates (S)-2,3,4,5-tetrahydrodipicolinate.

The protein belongs to the DapB family.

The protein localises to the cytoplasm. It catalyses the reaction (S)-2,3,4,5-tetrahydrodipicolinate + NAD(+) + H2O = (2S,4S)-4-hydroxy-2,3,4,5-tetrahydrodipicolinate + NADH + H(+). The enzyme catalyses (S)-2,3,4,5-tetrahydrodipicolinate + NADP(+) + H2O = (2S,4S)-4-hydroxy-2,3,4,5-tetrahydrodipicolinate + NADPH + H(+). Its pathway is amino-acid biosynthesis; L-lysine biosynthesis via DAP pathway; (S)-tetrahydrodipicolinate from L-aspartate: step 4/4. Catalyzes the conversion of 4-hydroxy-tetrahydrodipicolinate (HTPA) to tetrahydrodipicolinate. The polypeptide is 4-hydroxy-tetrahydrodipicolinate reductase (Beutenbergia cavernae (strain ATCC BAA-8 / DSM 12333 / CCUG 43141 / JCM 11478 / NBRC 16432 / NCIMB 13614 / HKI 0122)).